The following is a 302-amino-acid chain: MDQKRLTHLRQLEAESIHIIREVAAEFSNPVMMYSIGKDSSVMLHLARKAFYPGTLPFPLLHVDTGWKFREMYEFRDRTAKAYGCELLVHKNPEGVAMGINPFVHGSAKHTDIMKTEGLKQALDKYGFDAAFGGARRDEEKSRAKERIYSFRDRFHRWDPKNQRPELWHNYNGQINKGESIRVFPLSNWTEQDIWQYIWLENIEIVPLYLAAERPVLERDGMLMMIDDDRIDLQPGEVIKKRMVRFRTLGCWPLTGAVESSAQTLPEIIEEMLVSTTSERQGRVIDRDQAGSMELKKRQGYF.

Belongs to the PAPS reductase family. CysD subfamily. In terms of assembly, heterodimer composed of CysD, the smaller subunit, and CysN.

The enzyme catalyses sulfate + ATP + H(+) = adenosine 5'-phosphosulfate + diphosphate. Its pathway is sulfur metabolism; hydrogen sulfide biosynthesis; sulfite from sulfate: step 1/3. With CysN forms the ATP sulfurylase (ATPS) that catalyzes the adenylation of sulfate producing adenosine 5'-phosphosulfate (APS) and diphosphate, the first enzymatic step in sulfur assimilation pathway. APS synthesis involves the formation of a high-energy phosphoric-sulfuric acid anhydride bond driven by GTP hydrolysis by CysN coupled to ATP hydrolysis by CysD. The protein is Sulfate adenylyltransferase subunit 2 of Citrobacter koseri (strain ATCC BAA-895 / CDC 4225-83 / SGSC4696).